The sequence spans 566 residues: Arginine--tRNA ligase (566 aa).

Residues Pro-120 to His-130 carry the 'HIGH' region motif.

It belongs to the class-I aminoacyl-tRNA synthetase family. In terms of assembly, monomer.

Its subcellular location is the cytoplasm. The catalysed reaction is tRNA(Arg) + L-arginine + ATP = L-arginyl-tRNA(Arg) + AMP + diphosphate. This is Arginine--tRNA ligase from Clostridium kluyveri (strain NBRC 12016).